We begin with the raw amino-acid sequence, 487 residues long: NAD-dependent histone deacetylase HST3 (487 aa).

Positions 15-336 (PADTSIKLHE…FLTQEQLDSE (322 aa)) constitute a Deacetylase sirtuin-type domain. Residues 40-59 (GAGI…DGLY) and 129-132 (QNID) each bind NAD(+). The Proton acceptor role is filled by H167. Residues C175, C178, C200, and C203 each contribute to the Zn(2+) site. Residues 261–263 (GTS), 291–293 (NKT), and C312 contribute to the NAD(+) site. Positions 397–406 (VESVSVKEEP) are enriched in basic and acidic residues. Positions 397–487 (VESVSVKEEP…ARKGITLDQH (91 aa)) are disordered. The segment covering 415–425 (HKPKQATKLKR) has biased composition (basic residues). Over residues 448–459 (DQLSSPASSING) the composition is skewed to polar residues.

Belongs to the sirtuin family. Class I subfamily. The cofactor is Zn(2+).

Its subcellular location is the cytoplasm. The protein localises to the nucleus. The catalysed reaction is N(6)-acetyl-L-lysyl-[protein] + NAD(+) + H2O = 2''-O-acetyl-ADP-D-ribose + nicotinamide + L-lysyl-[protein]. NAD-dependent histone deacetylase, which could function in telomeric silencing, cell cycle progression and chromosome stability. This is NAD-dependent histone deacetylase HST3 (HST3) from Candida albicans (strain SC5314 / ATCC MYA-2876) (Yeast).